A 641-amino-acid chain; its full sequence is Protein BCAP (641 aa).

Coiled-coil stretches lie at residues 83–144 (HWPV…KQND), 191–270 (EKDN…RKLE), 299–375 (QKQK…EREQ), and 487–599 (FKLE…TLNA).

The protein belongs to the ODF2 family.

The protein resides in the cytoplasm. It localises to the cytoskeleton. Its subcellular location is the microtubule organizing center. It is found in the centrosome. The protein localises to the centriole. The protein resides in the centriolar satellite. It localises to the cilium basal body. In terms of biological role, acts as a suppressor of ciliogenesis, specifically, the initiation of ciliogenesis. The chain is Protein BCAP (odf2l) from Xenopus laevis (African clawed frog).